The chain runs to 559 residues: Urocanate hydratase (559 aa).

NAD(+) contacts are provided by residues 49–50, Gln127, 173–175, Asp193, Arg198, 239–240, 260–264, 270–271, and Tyr319; these read GG, GMG, NA, QTSAH, and YL. Cys407 is an active-site residue. NAD(+) is bound at residue Gly489.

Belongs to the urocanase family. The cofactor is NAD(+).

The protein localises to the cytoplasm. The enzyme catalyses 4-imidazolone-5-propanoate = trans-urocanate + H2O. Its pathway is amino-acid degradation; L-histidine degradation into L-glutamate; N-formimidoyl-L-glutamate from L-histidine: step 2/3. Its function is as follows. Catalyzes the conversion of urocanate to 4-imidazolone-5-propionate. This is Urocanate hydratase from Shouchella clausii (strain KSM-K16) (Alkalihalobacillus clausii).